A 245-amino-acid polypeptide reads, in one-letter code: Proteolipid protein DM alpha (245 aa).

4 helical membrane-spanning segments follow: residues 19 to 35 (LIATILCFVGVALFCGC), 71 to 87 (IIYGTASFSFLYGVLLL), 117 to 133 (FIFLTYALGVTWMGVFA), and 204 to 220 (LFIATFAGAAATVIALL).

Belongs to the myelin proteolipid protein family. As to expression, highly expressed in white matter in myelinating shark brain.

It is found in the membrane. This Squalus acanthias (Spiny dogfish) protein is Proteolipid protein DM alpha.